Reading from the N-terminus, the 65-residue chain is Adrenergic toxin rho-elapitoxin-Dp1a (65 aa).

4 cysteine pairs are disulfide-bonded: Cys3/Cys24, Cys17/Cys42, Cys46/Cys57, and Cys58/Cys63.

The protein belongs to the three-finger toxin family. Short-chain subfamily. Aminergic toxin sub-subfamily. Expressed by the venom gland.

The protein resides in the secreted. Its function is as follows. This toxin shows activities on different G-protein coupled receptors. It is highly potent on various alpha-adrenoceptors (ADRA) (subnanomolar affinity for ADRA1A). Order of potency is the following: ADRA1A &gt; ADRA1B &gt; ADRA1D &gt; ADRA2C. It is also found to reversibly bind to muscarinic acetylcholine receptors (CHRM), but the affinity is much weaker (CHRM1 and CHRM2, Ki&gt;1 uM; CHRM3, Ki=140 nM; CHRM4, Ki=120 nM; CHRM5, Ki=350 nM). The protein is Adrenergic toxin rho-elapitoxin-Dp1a of Dendroaspis polylepis polylepis (Black mamba).